Here is an 82-residue protein sequence, read N- to C-terminus: ATP synthase subunit c (82 aa).

2 consecutive transmembrane segments (helical) span residues 7-27 (AASV…PGIG) and 57-77 (FAFM…LLFA).

This sequence belongs to the ATPase C chain family. In terms of assembly, F-type ATPases have 2 components, F(1) - the catalytic core - and F(0) - the membrane proton channel. F(1) has five subunits: alpha(3), beta(3), gamma(1), delta(1), epsilon(1). F(0) has four main subunits: a(1), b(1), b'(1) and c(10-14). The alpha and beta chains form an alternating ring which encloses part of the gamma chain. F(1) is attached to F(0) by a central stalk formed by the gamma and epsilon chains, while a peripheral stalk is formed by the delta, b and b' chains.

It localises to the cellular thylakoid membrane. Functionally, f(1)F(0) ATP synthase produces ATP from ADP in the presence of a proton or sodium gradient. F-type ATPases consist of two structural domains, F(1) containing the extramembraneous catalytic core and F(0) containing the membrane proton channel, linked together by a central stalk and a peripheral stalk. During catalysis, ATP synthesis in the catalytic domain of F(1) is coupled via a rotary mechanism of the central stalk subunits to proton translocation. Key component of the F(0) channel; it plays a direct role in translocation across the membrane. A homomeric c-ring of between 10-14 subunits forms the central stalk rotor element with the F(1) delta and epsilon subunits. The polypeptide is ATP synthase subunit c (Prochlorococcus marinus (strain MIT 9303)).